The chain runs to 1397 residues: DNA-directed RNA polymerase subunit beta' (1397 aa).

Zn(2+)-binding residues include cysteine 71, cysteine 73, cysteine 86, and cysteine 89. Mg(2+) is bound by residues aspartate 462, aspartate 464, and aspartate 466. 4 residues coordinate Zn(2+): cysteine 811, cysteine 885, cysteine 892, and cysteine 895. Positions 1368–1397 (QNRDDKILEDQGGATPTASTEIKEPAEGAA) are disordered. Basic and acidic residues predominate over residues 1388 to 1397 (EIKEPAEGAA).

This sequence belongs to the RNA polymerase beta' chain family. In terms of assembly, the RNAP catalytic core consists of 2 alpha, 1 beta, 1 beta' and 1 omega subunit. When a sigma factor is associated with the core the holoenzyme is formed, which can initiate transcription. The cofactor is Mg(2+). Zn(2+) serves as cofactor.

The catalysed reaction is RNA(n) + a ribonucleoside 5'-triphosphate = RNA(n+1) + diphosphate. In terms of biological role, DNA-dependent RNA polymerase catalyzes the transcription of DNA into RNA using the four ribonucleoside triphosphates as substrates. This is DNA-directed RNA polymerase subunit beta' from Parvibaculum lavamentivorans (strain DS-1 / DSM 13023 / NCIMB 13966).